The primary structure comprises 220 residues: MAILFAVVARGTTILAKHAWCGGNFLEVTEQILAKIPSENNKLTYSHGNYLFHYICQDRIVYLCITDDDFERSRAFGFLNEVKKRFQTTYGSRAQTALPYAMNSEFSSVLAAQLKHHSENQSLDRVTETQAQVDELKGIMVRNIDLVAQRGERLELLIDKTENLVDSSVTFKTTSRNLARAMCVKNVKLTAIIVVVSIVFIYIIVSPLCGGFTWPSCVKK.

The residue at position 2 (A2) is an N-acetylalanine. At 2–188 the chain is on the cytoplasmic side; the sequence is AILFAVVARG…ARAMCVKNVK (187 aa). The 104-residue stretch at 7–110 folds into the Longin domain; it reads VVARGTTILA…AMNSEFSSVL (104 aa). The 61-residue stretch at 125-185 folds into the v-SNARE coiled-coil homology domain; the sequence is RVTETQAQVD…RNLARAMCVK (61 aa). Phosphoserine occurs at positions 167 and 168. The chain crosses the membrane as a helical; Anchor for type IV membrane protein span at residues 189–209; that stretch reads LTAIIVVVSIVFIYIIVSPLC. The Vesicular segment spans residues 210–220; that stretch reads GGFTWPSCVKK.

Belongs to the synaptobrevin family. In terms of assembly, may interact with STX17. Component of the SNARE complex composed of STX4, SNAP23 and VAMP7 that binds SYT7 during lysosomal exocytosis. Component of the SNARE complex composed of STX7, STX8, VAMP7 and VTI1B that is required for heterotypic fusion of late endosomes with lysosomes. Interacts with PICALM. Interacts with RAB21. Expressed in brain, kidney, liver, lung, spleen and thymus. Not expressed in heart and skeletal muscle.

The protein localises to the cytoplasmic vesicle. Its subcellular location is the secretory vesicle membrane. The protein resides in the golgi apparatus. It localises to the trans-Golgi network membrane. It is found in the late endosome membrane. The protein localises to the lysosome membrane. Its subcellular location is the endoplasmic reticulum membrane. The protein resides in the phagosome membrane. It localises to the synapse. It is found in the synaptosome. Its function is as follows. Involved in the targeting and/or fusion of transport vesicles to their target membrane during transport of proteins from the early endosome to the lysosome. Required for heterotypic fusion of late endosomes with lysosomes and homotypic lysosomal fusion. Required for calcium regulated lysosomal exocytosis. Involved in the export of chylomicrons from the endoplasmic reticulum to the cis Golgi. Required for exocytosis of mediators during eosinophil and neutrophil degranulation, and target cell killing by natural killer cells. Required for focal exocytosis of late endocytic vesicles during phagosome formation. The polypeptide is Vesicle-associated membrane protein 7 (Vamp7) (Rattus norvegicus (Rat)).